The chain runs to 366 residues: Phospho-N-acetylmuramoyl-pentapeptide-transferase (366 aa).

The next 10 membrane-spanning stretches (helical) occupy residues 27–47 (AALFTSALIVFLFGPTIINSL), 71–91 (TPTMGGLMILAGIVGASLLWA), 93–113 (LSNVYVVATLLVTLGFGAIGF), 134–154 (LGIEFIIAGIAVYFMMRTALA), 174–194 (FLINLGIMFVVFGGFVIVGAG), 205–225 (GLAIVPVMIAAASFGVIAYLA), 245–265 (LAVVLGAVIGAGLGFLWFNAP), 268–288 (AIFMGDTGSLALGGTIGTVAV), 294–314 (IVMAIIGGLFVMETLSVIIQV), and 343–363 (QVVIRFWIIAVGLALLGLSTL).

This sequence belongs to the glycosyltransferase 4 family. MraY subfamily. Mg(2+) is required as a cofactor.

The protein localises to the cell inner membrane. It catalyses the reaction UDP-N-acetyl-alpha-D-muramoyl-L-alanyl-gamma-D-glutamyl-meso-2,6-diaminopimeloyl-D-alanyl-D-alanine + di-trans,octa-cis-undecaprenyl phosphate = di-trans,octa-cis-undecaprenyl diphospho-N-acetyl-alpha-D-muramoyl-L-alanyl-D-glutamyl-meso-2,6-diaminopimeloyl-D-alanyl-D-alanine + UMP. Its pathway is cell wall biogenesis; peptidoglycan biosynthesis. Catalyzes the initial step of the lipid cycle reactions in the biosynthesis of the cell wall peptidoglycan: transfers peptidoglycan precursor phospho-MurNAc-pentapeptide from UDP-MurNAc-pentapeptide onto the lipid carrier undecaprenyl phosphate, yielding undecaprenyl-pyrophosphoryl-MurNAc-pentapeptide, known as lipid I. The protein is Phospho-N-acetylmuramoyl-pentapeptide-transferase of Rhizobium etli (strain CIAT 652).